Here is a 505-residue protein sequence, read N- to C-terminus: Maturase K (505 aa).

This sequence belongs to the intron maturase 2 family. MatK subfamily.

The protein resides in the plastid. It localises to the chloroplast. In terms of biological role, usually encoded in the trnK tRNA gene intron. Probably assists in splicing its own and other chloroplast group II introns. This chain is Maturase K, found in Rhizophora stylosa (Bakau).